The sequence spans 416 residues: Keratin, type I cuticular Ha1 (416 aa).

A head region spans residues 1 to 56 (MPYNFCLPSLSCRTSCSSRPCVPPSCHSCTLPGACNIPANVSNCNWFCEGSFNGSE). The region spanning 56–367 (EKETMQFLND…SLLESEDCNL (312 aa)) is the IF rod domain. The interval 57 to 91 (KETMQFLNDRLASYLEKVRQLERDNAELENLIRER) is coil 1A. Residues 92 to 102 (SQQQEPLLCPS) are linker 1. Positions 103–203 (YQSYFKTIEE…HEQEVNTLRC (101 aa)) are coil 1B. The tract at residues 204 to 219 (QLGDRLNVEVDAAPTV) is linker 12. The segment at 220 to 363 (DLNRVLNETR…NTYRSLLESE (144 aa)) is coil 2. Residues 364–416 (DCNLPSNPCATTNACSKPIGPCLSNPCTPCVPPAPCTPCAPRPRCGPCNSFVR) are tail.

Belongs to the intermediate filament family.

The polypeptide is Keratin, type I cuticular Ha1 (KRT31) (Pan troglodytes (Chimpanzee)).